The primary structure comprises 1430 residues: FYVE, RhoGEF and PH domain-containing protein 6 (1430 aa).

The disordered stretch occupies residues methionine 1–isoleucine 36. Low complexity predominate over residues lysine 15–lysine 24. Serine 231 carries the phosphoserine modification. A disordered region spans residues cysteine 330 to leucine 351. The segment covering proline 334–leucine 351 has biased composition (polar residues). Serine 515 carries the post-translational modification Phosphoserine. The disordered stretch occupies residues glutamate 516–arginine 538. Residues serine 527–arginine 538 show a composition bias toward basic and acidic residues. 4 positions are modified to phosphoserine: serine 554, serine 605, serine 692, and serine 721. Disordered regions lie at residues asparagine 695–serine 739 and proline 800–lysine 869. Residues serine 728–serine 739 are compositionally biased toward polar residues. Residues proline 831 to serine 847 are compositionally biased toward acidic residues. Positions serine 851 to methionine 868 are enriched in basic and acidic residues. The 190-residue stretch at lysine 871–threonine 1060 folds into the DH domain. Residues valine 1089–glutamate 1183 form the PH 1 domain. Position 1197 is a phosphoserine (serine 1197). An FYVE-type zinc finger spans residues aspartate 1222–glutamine 1281. 8 residues coordinate Zn(2+): cysteine 1228, cysteine 1231, cysteine 1244, cysteine 1247, cysteine 1252, cysteine 1255, cysteine 1273, and cysteine 1276. The region spanning aspartate 1333–isoleucine 1429 is the PH 2 domain.

The protein resides in the cytoplasm. It is found in the cytoskeleton. Functionally, may activate CDC42, a member of the Ras-like family of Rho- and Rac proteins, by exchanging bound GDP for free GTP. May play a role in regulating the actin cytoskeleton and cell shape. This is FYVE, RhoGEF and PH domain-containing protein 6 (FGD6) from Homo sapiens (Human).